A 72-amino-acid polypeptide reads, in one-letter code: Large ribosomal subunit protein bL31 (72 aa).

4 residues coordinate Zn(2+): Cys-16, Cys-18, Cys-38, and Cys-41.

This sequence belongs to the bacterial ribosomal protein bL31 family. Type A subfamily. As to quaternary structure, part of the 50S ribosomal subunit. Zn(2+) is required as a cofactor.

Its function is as follows. Binds the 23S rRNA. The protein is Large ribosomal subunit protein bL31 of Beutenbergia cavernae (strain ATCC BAA-8 / DSM 12333 / CCUG 43141 / JCM 11478 / NBRC 16432 / NCIMB 13614 / HKI 0122).